The sequence spans 120 residues: Large ribosomal subunit protein uL18 (120 aa).

This sequence belongs to the universal ribosomal protein uL18 family. As to quaternary structure, part of the 50S ribosomal subunit; part of the 5S rRNA/L5/L18/L25 subcomplex. Contacts the 5S and 23S rRNAs.

Its function is as follows. This is one of the proteins that bind and probably mediate the attachment of the 5S RNA into the large ribosomal subunit, where it forms part of the central protuberance. This chain is Large ribosomal subunit protein uL18, found in Macrococcus caseolyticus (strain JCSC5402) (Macrococcoides caseolyticum).